The following is a 363-amino-acid chain: Lipoyl synthase (363 aa).

[4Fe-4S] cluster is bound by residues Cys-55, Cys-60, Cys-66, Cys-81, Cys-85, Cys-88, and Ser-292. Positions 67–281 constitute a Radical SAM core domain; the sequence is WESREATFLI…SKLAKELGFG (215 aa). Residues 338-363 are disordered; the sequence is PSEETPVTTRMAKTPAQSNSVAATIR. The segment covering 352–363 has biased composition (polar residues); sequence PAQSNSVAATIR.

Belongs to the radical SAM superfamily. Lipoyl synthase family. The cofactor is [4Fe-4S] cluster.

The protein localises to the cytoplasm. It catalyses the reaction [[Fe-S] cluster scaffold protein carrying a second [4Fe-4S](2+) cluster] + N(6)-octanoyl-L-lysyl-[protein] + 2 oxidized [2Fe-2S]-[ferredoxin] + 2 S-adenosyl-L-methionine + 4 H(+) = [[Fe-S] cluster scaffold protein] + N(6)-[(R)-dihydrolipoyl]-L-lysyl-[protein] + 4 Fe(3+) + 2 hydrogen sulfide + 2 5'-deoxyadenosine + 2 L-methionine + 2 reduced [2Fe-2S]-[ferredoxin]. Its pathway is protein modification; protein lipoylation via endogenous pathway; protein N(6)-(lipoyl)lysine from octanoyl-[acyl-carrier-protein]: step 2/2. In terms of biological role, catalyzes the radical-mediated insertion of two sulfur atoms into the C-6 and C-8 positions of the octanoyl moiety bound to the lipoyl domains of lipoate-dependent enzymes, thereby converting the octanoylated domains into lipoylated derivatives. This is Lipoyl synthase from Corynebacterium aurimucosum (strain ATCC 700975 / DSM 44827 / CIP 107346 / CN-1) (Corynebacterium nigricans).